The following is a 125-amino-acid chain: Large ribosomal subunit protein bL12 (125 aa).

This sequence belongs to the bacterial ribosomal protein bL12 family. Homodimer. Part of the ribosomal stalk of the 50S ribosomal subunit. Forms a multimeric L10(L12)X complex, where L10 forms an elongated spine to which 2 to 4 L12 dimers bind in a sequential fashion. Binds GTP-bound translation factors.

In terms of biological role, forms part of the ribosomal stalk which helps the ribosome interact with GTP-bound translation factors. Is thus essential for accurate translation. This is Large ribosomal subunit protein bL12 from Rhizobium johnstonii (strain DSM 114642 / LMG 32736 / 3841) (Rhizobium leguminosarum bv. viciae).